The primary structure comprises 138 residues: Large ribosomal subunit protein bL19 (138 aa).

This sequence belongs to the bacterial ribosomal protein bL19 family.

Functionally, this protein is located at the 30S-50S ribosomal subunit interface and may play a role in the structure and function of the aminoacyl-tRNA binding site. The protein is Large ribosomal subunit protein bL19 of Rickettsia africae (strain ESF-5).